Reading from the N-terminus, the 327-residue chain is Voltage-dependent calcium channel gamma-4 subunit (327 aa).

Residues 1 to 9 lie on the Cytoplasmic side of the membrane; it reads MVRCDRGLQ. A helical transmembrane segment spans residues 10 to 30; sequence MLLTTAGAFAAFSLMAIAIGT. Topologically, residues 31-107 are extracellular; sequence DYWLYSSAHI…EYLLRIVRAS (77 aa). N-linked (GlcNAc...) asparagine glycosylation is found at asparagine 42 and asparagine 45. The chain crosses the membrane as a helical span at residues 108-128; sequence SVFPILSTILLLLGGLCIGAG. Over 129 to 136 the chain is Cytoplasmic; the sequence is RIYSRKNN. The chain crosses the membrane as a helical span at residues 137 to 157; sequence IVLSAGILFVAAGLSNIIGII. The Extracellular portion of the chain corresponds to 158-186; it reads VYISSNTGDPSDKRDEDKKNHYNYGWSFY. A helical transmembrane segment spans residues 187 to 207; it reads FGALSFIVAETVGVLAVNIYI. The Cytoplasmic portion of the chain corresponds to 208-327; sequence EKNKELRFKT…SMLNRRTTPV (120 aa). Positions 235–261 are disordered; the sequence is SYRYRRRRSRSSSRSTEASPSRDVSPM. The span at 246 to 256 shows a compositional bias: low complexity; the sequence is SSRSTEASPSR. Serine 259 carries the phosphoserine modification.

This sequence belongs to the PMP-22/EMP/MP20 family. CACNG subfamily. In terms of assembly, interacts with CACNA1C. Identified in a complex with the L-type calcium channel subunits CACNA1C, CACNA2D1 and either CACNB1 or CACNB2. Acts as an auxiliary subunit for AMPA-selective glutamate receptors (AMPARs). Interacts with GRIA1. In terms of tissue distribution, detected in heart left ventricle.

It is found in the cell membrane. Functionally, regulates the activity of L-type calcium channels that contain CACNA1C as pore-forming subunit. Regulates the trafficking and gating properties of AMPA-selective glutamate receptors (AMPARs), including GRIA1 and GRIA4. Promotes their targeting to the cell membrane and synapses and modulates their gating properties by slowing their rates of activation, deactivation and desensitization and by mediating their resensitization. This chain is Voltage-dependent calcium channel gamma-4 subunit (CACNG4), found in Homo sapiens (Human).